We begin with the raw amino-acid sequence, 212 residues long: Penicillin-binding protein activator LpoB (212 aa).

A signal peptide spans 1 to 19 (MTKMHRYAAIAALAIFLSG). Cys20 carries the N-palmitoyl cysteine lipid modification. Cys20 carries the S-diacylglycerol cysteine lipid modification. The disordered stretch occupies residues 28–73 (PVEEVKPAPEQPAQPPQPPVVPSVPTIPQQPGPIEHEDQTGQPAPK). Residues 36–49 (PEQPAQPPQPPVVP) are compositionally biased toward pro residues.

This sequence belongs to the LpoB family. In terms of assembly, interacts with PBP1b.

It localises to the cell outer membrane. In terms of biological role, regulator of peptidoglycan synthesis that is essential for the function of penicillin-binding protein 1B (PBP1b). This chain is Penicillin-binding protein activator LpoB, found in Salmonella typhimurium (strain LT2 / SGSC1412 / ATCC 700720).